Consider the following 47-residue polypeptide: Photosystem II reaction center protein Psb30 (47 aa).

A helical membrane pass occupies residues 19 to 39; that stretch reads VIFQLLSVALIVIAGPVVIFL.

Belongs to the Psb30/Ycf12 family. As to quaternary structure, PSII is composed of 1 copy each of membrane proteins PsbA, PsbB, PsbC, PsbD, PsbE, PsbF, PsbH, PsbI, PsbJ, PsbK, PsbL, PsbM, PsbT, PsbX, PsbY, PsbZ, Psb30/Ycf12, peripheral proteins PsbO, CyanoQ (PsbQ), PsbU, PsbV and a large number of cofactors. It forms dimeric complexes.

It is found in the cellular thylakoid membrane. In terms of biological role, a core subunit of photosystem II (PSII), probably helps stabilize the reaction center. This Nostoc punctiforme (strain ATCC 29133 / PCC 73102) protein is Photosystem II reaction center protein Psb30.